An 89-amino-acid polypeptide reads, in one-letter code: UPF0237 protein Cgl1544/cg1742 (89 aa).

Positions 4-82 constitute an ACT domain; that stretch reads IMTVTGQDHT…LVIRIQSEAL (79 aa).

The protein belongs to the UPF0237 family.

This Corynebacterium glutamicum (strain ATCC 13032 / DSM 20300 / JCM 1318 / BCRC 11384 / CCUG 27702 / LMG 3730 / NBRC 12168 / NCIMB 10025 / NRRL B-2784 / 534) protein is UPF0237 protein Cgl1544/cg1742.